A 373-amino-acid chain; its full sequence is NADH-quinone oxidoreductase subunit D (373 aa).

It belongs to the complex I 49 kDa subunit family. As to quaternary structure, NDH-1 is composed of 14 different subunits. Subunits NuoB, C, D, E, F, and G constitute the peripheral sector of the complex.

The protein localises to the cell inner membrane. It carries out the reaction a quinone + NADH + 5 H(+)(in) = a quinol + NAD(+) + 4 H(+)(out). In terms of biological role, NDH-1 shuttles electrons from NADH, via FMN and iron-sulfur (Fe-S) centers, to quinones in the respiratory chain. The immediate electron acceptor for the enzyme in this species is believed to be ubiquinone. Couples the redox reaction to proton translocation (for every two electrons transferred, four hydrogen ions are translocated across the cytoplasmic membrane), and thus conserves the redox energy in a proton gradient. This chain is NADH-quinone oxidoreductase subunit D, found in Syntrophobacter fumaroxidans (strain DSM 10017 / MPOB).